Reading from the N-terminus, the 397-residue chain is UDP-GlcNAc:betaGal beta-1,3-N-acetylglucosaminyltransferase 7 (397 aa).

Residues 1–6 (MSLWKK) are Cytoplasmic-facing. Residues 7–26 (TLYKSVCLALALLVAVTVFQ) form a helical; Signal-anchor for type II membrane protein membrane-spanning segment. Residues 27-397 (RSVTPGQFLQ…LTCSLKFQVL (371 aa)) are Lumenal-facing. Residues N84, N90, N210, and N387 are each glycosylated (N-linked (GlcNAc...) asparagine).

It belongs to the glycosyltransferase 31 family.

It localises to the golgi apparatus membrane. Its pathway is protein modification; protein glycosylation. In terms of biological role, N-acetyl glucosamine (GlcNAc) transferase that catalyzes the transfer of GlcNAc via a beta1-&gt;3 linkage from UDP-GlcNAc to the non-reducing terminal galactose (Gal) in the linearly growing chain of N- and O-linked keratan sulfate proteoglycans. Cooperates with B4GALT4 galactosyltransferase and CHST6 and CHST1 sulfotransferases to construct and elongate mono- and disulfated disaccharide units [-&gt;3Galbeta1-&gt;4(6-sulfoGlcNAcbeta)1-&gt;] and [-&gt;3(6-sulfoGalbeta)1-&gt;4(6-sulfoGlcNAcbeta)1-&gt;] within keratan sulfate polymer. Involved in biosynthesis of N-linked keratan sulfate proteoglycans in cornea, with an impact on proteoglycan fibril organization and corneal transparency. May play a role in the maintenance of tissue architecture by suppressing cellular motility and invasion. The protein is UDP-GlcNAc:betaGal beta-1,3-N-acetylglucosaminyltransferase 7 (B3gnt7) of Rattus norvegicus (Rat).